The following is a 560-amino-acid chain: Tudor and KH domain-containing protein (560 aa).

KH domains lie at Asp-52–Ile-115 and Pro-124–Ile-190. Residues Lys-65, Lys-76, Lys-110, Lys-112, Lys-152, Lys-175, Lys-181, Lys-187, and Lys-193 each participate in a glycyl lysine isopeptide (Lys-Gly) (interchain with G-Cter in ubiquitin) cross-link. Residues Arg-211–Gly-230 are disordered. Glycyl lysine isopeptide (Lys-Gly) (interchain with G-Cter in ubiquitin) cross-links involve residues Lys-256 and Lys-267. The tract at residues Glu-268–Ser-291 is disordered. Polar residues predominate over residues Asp-277–Thr-290. Ser-278 is subject to Phosphoserine. The 60-residue stretch at Thr-353–Leu-412 folds into the Tudor domain. Residues Lys-479, Lys-510, and Lys-529 each participate in a glycyl lysine isopeptide (Lys-Gly) (interchain with G-Cter in ubiquitin) cross-link.

It belongs to the Tdrkh family. Interacts with (symmetrically methylated) PIWIL1, PIWIL2 and PIWIL4. Post-translationally, ubiquitinated by PRKN during mitophagy, leading to its degradation and enhancement of mitophagy. Deubiquitinated by USP30. Highly expressed in testis, present at lower level in brain. Weakly or not expressed in other tissues (at protein level).

The protein resides in the cytoplasm. The protein localises to the mitochondrion. Participates in the primary piRNA biogenesis pathway and is required during spermatogenesis to repress transposable elements and prevent their mobilization, which is essential for the germline integrity. The piRNA metabolic process mediates the repression of transposable elements during meiosis by forming complexes composed of piRNAs and Piwi proteins and govern the methylation and subsequent repression of transposons. Required for the final steps of primary piRNA biogenesis by participating in the processing of 31-37 nt intermediates into mature piRNAs. May act in pi-bodies and piP-bodies by transferring piRNA precursors or intermediates to or between these granules. In Mus musculus (Mouse), this protein is Tudor and KH domain-containing protein (Tdrkh).